A 172-amino-acid polypeptide reads, in one-letter code: Adenine phosphoribosyltransferase (172 aa).

This sequence belongs to the purine/pyrimidine phosphoribosyltransferase family. Homodimer.

It is found in the cytoplasm. It carries out the reaction AMP + diphosphate = 5-phospho-alpha-D-ribose 1-diphosphate + adenine. The protein operates within purine metabolism; AMP biosynthesis via salvage pathway; AMP from adenine: step 1/1. Functionally, catalyzes a salvage reaction resulting in the formation of AMP, that is energically less costly than de novo synthesis. In Desulforamulus reducens (strain ATCC BAA-1160 / DSM 100696 / MI-1) (Desulfotomaculum reducens), this protein is Adenine phosphoribosyltransferase.